The following is a 335-amino-acid chain: UDP-3-O-acylglucosamine N-acyltransferase (335 aa).

Histidine 225 acts as the Proton acceptor in catalysis.

This sequence belongs to the transferase hexapeptide repeat family. LpxD subfamily. Homotrimer.

It carries out the reaction a UDP-3-O-[(3R)-3-hydroxyacyl]-alpha-D-glucosamine + a (3R)-hydroxyacyl-[ACP] = a UDP-2-N,3-O-bis[(3R)-3-hydroxyacyl]-alpha-D-glucosamine + holo-[ACP] + H(+). It functions in the pathway bacterial outer membrane biogenesis; LPS lipid A biosynthesis. Its function is as follows. Catalyzes the N-acylation of UDP-3-O-acylglucosamine using 3-hydroxyacyl-ACP as the acyl donor. Is involved in the biosynthesis of lipid A, a phosphorylated glycolipid that anchors the lipopolysaccharide to the outer membrane of the cell. The sequence is that of UDP-3-O-acylglucosamine N-acyltransferase from Delftia acidovorans (strain DSM 14801 / SPH-1).